The following is a 328-amino-acid chain: Carbonic anhydrase-related protein 11 (328 aa).

The first 23 residues, 1–23 (MGAAARLSAPRALVLWAALGAAA), serve as a signal peptide directing secretion. The Alpha-carbonic anhydrase domain maps to 33-303 (DWWSYKDNLQ…LAHRALRGNR (271 aa)). Residues N118, N170, and N260 are each glycosylated (N-linked (GlcNAc...) asparagine). The disordered stretch occupies residues 299–328 (LRGNRDPRHPERRCRGPNYRLHVDGVPHGR). Positions 319 to 328 (LHVDGVPHGR) are enriched in basic and acidic residues.

Belongs to the alpha-carbonic anhydrase family. As to expression, expressed abundantly in the brain with moderate expression also present in spinal cord and thyroid.

It localises to the secreted. In terms of biological role, does not have a catalytic activity. This is Carbonic anhydrase-related protein 11 (CA11) from Homo sapiens (Human).